Here is a 1412-residue protein sequence, read N- to C-terminus: Protein MODIFIER OF SNC1 1 (1412 aa).

6 disordered regions span residues 1–276 (MTSS…QSYP), 384–437 (GYGS…TQRP), 472–798 (QQMQ…KQKQ), 827–888 (NEGV…DESI), 909–1144 (DIKV…WNDG), and 1156–1412 (AEEM…GDRN). The segment covering 56 to 103 (SWGSKSSLNAWGTSSLSPRTESGPGSPSHLSNRPSSGGSVTRPSTADS) has biased composition (polar residues). Phosphoserine is present on Ser72. A compositionally biased stretch (low complexity) spans 109 to 119 (SSSSVAWDSNS). Polar residues predominate over residues 120–135 (RPSSASGVFPSNQPSV). Composition is skewed to basic and acidic residues over residues 197–207 (AEKDTSEKSTR) and 236–267 (ANDR…EGQL). The segment covering 478-488 (RNERREIRNDA) has biased composition (basic and acidic residues). Polar residues-rich tracts occupy residues 517 to 531 (KTRT…SSVV), 539 to 553 (QPRT…NKVS), 565 to 581 (SKNS…TNKN), and 610 to 639 (RIVN…TNTE). Residues 665-713 (DPKDNQRSTMRELARQRAQQRQKEEEERARDQRAKALAKLEELNRRSQI) are compositionally biased toward basic and acidic residues. Residues 667 to 717 (KDNQRSTMRELARQRAQQRQKEEEERARDQRAKALAKLEELNRRSQIYEEG) are a coiled coil. 3 stretches are compositionally biased toward polar residues: residues 738-749 (GSHSSNATNSVE), 756-779 (KNTT…QQDN), and 829-847 (GVSS…SAES). Residues 850-862 (PKRKNNRNGKKKH) show a composition bias toward basic residues. Residues 877–888 (VGKETKSGDESI) are compositionally biased toward basic and acidic residues. At Ser883 the chain carries Phosphoserine. Composition is skewed to polar residues over residues 914-938 (GDSS…NWKS) and 983-1003 (QTTV…QTSS). Residues 1006–1023 (KRVEIERYVPKPIVKEMA) show a composition bias toward basic and acidic residues. The segment covering 1056 to 1070 (LQPSGSTAGKSGSPS) has biased composition (polar residues). The span at 1071–1084 (KSRHGNGRQGKHGR) shows a compositional bias: basic residues. The span at 1106–1137 (FVTSNQPIRGTVNYHSSKQTEQIAAKDQTTCN) shows a compositional bias: polar residues. Basic and acidic residues-rich tracts occupy residues 1191–1202 (DPKKGNKRDFNK), 1222–1232 (KEGRVPGDHVW), and 1242–1251 (GGRESTRDKP). Composition is skewed to polar residues over residues 1266 to 1286 (GFTT…QNRS) and 1293 to 1307 (VEQN…NTGQ). Basic and acidic residues-rich tracts occupy residues 1338–1351 (SNRD…HYEY) and 1359–1369 (YDGERSREQSK). The segment covering 1384 to 1397 (QGQQRQGGYQQQRG) has biased composition (low complexity). Over residues 1400-1412 (GRNGGHGFTGDRN) the composition is skewed to gly residues.

Interacts with TCP14 and TCP15.

Involved in the regulation of the chromatin structure and DNA methylation at the SNC1 locus. Regulates the expression of SNC1 at chromatin level. This Arabidopsis thaliana (Mouse-ear cress) protein is Protein MODIFIER OF SNC1 1 (MOS1).